The following is a 209-amino-acid chain: CASP-like protein 2A1 (209 aa).

At 1 to 38 the chain is on the cytoplasmic side; the sequence is MSKMAEEKVLAAPATVDGGMQSSGDLQASSAAAARVRP. The chain crosses the membrane as a helical span at residues 39–59; the sequence is VETLLRAAPLGLCVAAMAIML. Over 60-80 the chain is Extracellular; it reads RNSVTNEYGTVSYSDLGGFKY. The chain crosses the membrane as a helical span at residues 81–101; sequence LVYANGLCAAYSLASAFYIAV. Over 102–109 the chain is Cytoplasmic; the sequence is PRPATLSR. Residues 110 to 130 form a helical membrane-spanning segment; the sequence is SWVVFLLDQVFTYLILAAGAA. Over 131-163 the chain is Extracellular; it reads SAELLYLAYNGDKEVTWSEACGVFGGFCRQART. Residues 164 to 184 traverse the membrane as a helical segment; that stretch reads SVAITFASVACYILLSLISSY. Residues 185–209 are Cytoplasmic-facing; it reads RLFSAYDPPQPSLGNKGVEIAAFPR.

It belongs to the Casparian strip membrane proteins (CASP) family. In terms of assembly, homodimer and heterodimers.

The protein resides in the cell membrane. The polypeptide is CASP-like protein 2A1 (Oryza sativa subsp. indica (Rice)).